The primary structure comprises 476 residues: Protein DETOXIFICATION 17 (476 aa).

12 helical membrane-spanning segments follow: residues Leu-29–Met-51, Phe-70–Cys-90, Phe-111–Leu-131, Ile-140–Leu-160, Val-177–Leu-197, Gly-205–Val-225, Ile-252–Leu-272, Val-286–Gly-306, Leu-326–Leu-346, Ile-363–Leu-383, Leu-405–Ile-425, and Trp-431–Phe-451.

Belongs to the multi antimicrobial extrusion (MATE) (TC 2.A.66.1) family.

It localises to the membrane. The protein is Protein DETOXIFICATION 17 of Arabidopsis thaliana (Mouse-ear cress).